A 927-amino-acid polypeptide reads, in one-letter code: Huntington interacting protein related 1 (927 aa).

The 130-residue stretch at 7-136 (AREVFVRAQL…TFHNKYPVVP (130 aa)) folds into the ENTH domain. Residues 336-524 (RAVEDEKFAK…RESHANQLVQ (189 aa)) are a coiled coil. Positions 673–914 (QTDIDKDVVG…ALRKQHYHMA (242 aa)) constitute an I/LWEQ domain.

It belongs to the SLA2 family.

It localises to the cytoplasm. Its subcellular location is the cytoskeleton. Regulates pre-synaptic vesicle recycling at neuromuscular junctions of mechanosensory neurons. Plays a role in maintaining a normal defecation cycle. The polypeptide is Huntington interacting protein related 1 (hipr-1) (Caenorhabditis elegans).